Consider the following 299-residue polypeptide: tRNA-cytidine(32) 2-sulfurtransferase (299 aa).

The PP-loop motif motif lies at 56–61 (SGGKDS). [4Fe-4S] cluster is bound by residues Cys131, Cys134, and Cys222.

The protein belongs to the TtcA family. As to quaternary structure, homodimer. Requires Mg(2+) as cofactor. [4Fe-4S] cluster serves as cofactor.

The protein localises to the cytoplasm. It carries out the reaction cytidine(32) in tRNA + S-sulfanyl-L-cysteinyl-[cysteine desulfurase] + AH2 + ATP = 2-thiocytidine(32) in tRNA + L-cysteinyl-[cysteine desulfurase] + A + AMP + diphosphate + H(+). Its pathway is tRNA modification. Catalyzes the ATP-dependent 2-thiolation of cytidine in position 32 of tRNA, to form 2-thiocytidine (s(2)C32). The sulfur atoms are provided by the cysteine/cysteine desulfurase (IscS) system. The chain is tRNA-cytidine(32) 2-sulfurtransferase from Xylella fastidiosa (strain M12).